The following is a 124-amino-acid chain: Small ribosomal subunit protein uS12 (124 aa).

Residues 1-24 (MPTINQLIKKPRKSQKEKTASPAL) are disordered. Position 89 is a 3-methylthioaspartic acid (aspartate 89).

This sequence belongs to the universal ribosomal protein uS12 family. Part of the 30S ribosomal subunit. Contacts proteins S8 and S17. May interact with IF1 in the 30S initiation complex.

Its function is as follows. With S4 and S5 plays an important role in translational accuracy. Functionally, interacts with and stabilizes bases of the 16S rRNA that are involved in tRNA selection in the A site and with the mRNA backbone. Located at the interface of the 30S and 50S subunits, it traverses the body of the 30S subunit contacting proteins on the other side and probably holding the rRNA structure together. The combined cluster of proteins S8, S12 and S17 appears to hold together the shoulder and platform of the 30S subunit. In Borrelia hermsii (strain HS1 / DAH), this protein is Small ribosomal subunit protein uS12.